We begin with the raw amino-acid sequence, 283 residues long: 4-diphosphocytidyl-2-C-methyl-D-erythritol kinase (283 aa).

Residue Lys-10 is part of the active site. 99-109 (PMGGGLGGGSS) contacts ATP. Asp-141 is a catalytic residue.

This sequence belongs to the GHMP kinase family. IspE subfamily. In terms of assembly, homodimer.

It carries out the reaction 4-CDP-2-C-methyl-D-erythritol + ATP = 4-CDP-2-C-methyl-D-erythritol 2-phosphate + ADP + H(+). The protein operates within isoprenoid biosynthesis; isopentenyl diphosphate biosynthesis via DXP pathway; isopentenyl diphosphate from 1-deoxy-D-xylulose 5-phosphate: step 3/6. Functionally, catalyzes the phosphorylation of the position 2 hydroxy group of 4-diphosphocytidyl-2C-methyl-D-erythritol. The protein is 4-diphosphocytidyl-2-C-methyl-D-erythritol kinase of Salmonella choleraesuis (strain SC-B67).